The following is a 538-amino-acid chain: Syncytin-2 (538 aa).

The signal sequence occupies residues 1–15 (MGLLLLVLILTPLLA). Topologically, residues 31–478 (LLQSTGSPYS…GWLNWEGTWK (448 aa)) are extracellular. The CXXC signature appears at 43-46 (CWLC). 3 cysteine pairs are disulfide-bonded: cysteine 43–cysteine 46, cysteine 43–cysteine 439, and cysteine 431–cysteine 438. 8 N-linked (GlcNAc...) asparagine glycosylation sites follow: asparagine 133, asparagine 146, asparagine 177, asparagine 220, asparagine 241, asparagine 247, asparagine 312, and asparagine 332. The interval 354 to 374 (FIPLLAGLGILAGTGTGIAGI) is fusion peptide. Residues 414-430 (LQNRRGLDMLTAAQGGI) carry the CKS-17 motif. Residues 431–439 (CLALDEKCC) carry the CX6CC motif. Residue asparagine 443 is glycosylated (N-linked (GlcNAc...) asparagine). A helical transmembrane segment spans residues 479 to 499 (WFSWVLPFIGPFVSLLLLLLF). Over 500 to 538 (GPCLLNLITQFVSSRLQAIKLQTNLSAGRRPRTIQESPF) the chain is Cytoplasmic.

Belongs to the gamma type-C retroviral envelope protein family. HERV class-I FRD env subfamily. The surface and transmembrane proteins form a heterodimer. They are attached by non-covalent interactions or by a labile interchain disulfide bond. Post-translationally, specific enzymatic cleavages in vivo yield the mature SU and TM proteins. The CXXC motif is highly conserved across a broad range of retroviral envelope proteins. It is thought to participate in the formation of a labile disulfide bond possibly with the CX6CC motif present in the transmembrane protein.

The protein resides in the cell membrane. Its function is as follows. This endogenous retroviral envelope protein has retained its original fusogenic properties and participates in trophoblast fusion and the formation of a syncytium during placenta morphogenesis. The interaction with MFSD2A is apparently important for this process. In terms of biological role, endogenous envelope proteins may have kept, lost or modified their original function during evolution and this one is unable to confer infectivity. The protein is Syncytin-2 (ERVFRD-1) of Hylobates moloch (Silvery gibbon).